The chain runs to 303 residues: Coenzyme PQQ synthesis protein B (303 aa).

Belongs to the PqqB family.

The protein operates within cofactor biosynthesis; pyrroloquinoline quinone biosynthesis. Its function is as follows. May be involved in the transport of PQQ or its precursor to the periplasm. The sequence is that of Coenzyme PQQ synthesis protein B from Pseudomonas syringae pv. tomato (strain ATCC BAA-871 / DC3000).